A 120-amino-acid chain; its full sequence is Large ribosomal subunit protein uL18 (120 aa).

The segment at 1–22 (MITKTSKNAARQKRHARVRAKL) is disordered. Residues 10–20 (ARQKRHARVRA) are compositionally biased toward basic residues.

This sequence belongs to the universal ribosomal protein uL18 family. As to quaternary structure, part of the 50S ribosomal subunit; part of the 5S rRNA/L5/L18/L25 subcomplex. Contacts the 5S and 23S rRNAs.

Its function is as follows. This is one of the proteins that bind and probably mediate the attachment of the 5S RNA into the large ribosomal subunit, where it forms part of the central protuberance. The chain is Large ribosomal subunit protein uL18 from Bacillus velezensis (strain DSM 23117 / BGSC 10A6 / LMG 26770 / FZB42) (Bacillus amyloliquefaciens subsp. plantarum).